A 637-amino-acid polypeptide reads, in one-letter code: Cell division cycle-related protein res1/sct1 (637 aa).

The 107-residue stretch at I6 to S112 folds into the HTH APSES-type domain. Residues A37 to F58 constitute a DNA-binding region (H-T-H motif). Positions F114 to S137 are disordered. ANK repeat units lie at residues D236 to A265 and H357 to I386.

As to quaternary structure, DSC1 contains cdc10 and sct1/res1.

Its function is as follows. Acts as a positive regulator of the mitotic cell cycle and as a negative regulator of sexual differentiation. May be involved in the transcriptional regulation of the cdc22 and cdt1 genes. Is an integral component of the DSC1-like complex. This is Cell division cycle-related protein res1/sct1 (res1) from Schizosaccharomyces pombe (strain 972 / ATCC 24843) (Fission yeast).